The following is a 419-amino-acid chain: MFSSSSAMTGKRAESWSRLLLLWLYRCARGLLVLSSSLDRDKLQLKATKQGSRNRFLHILWRCIVVMIYAGLWPMLTSAVIGKRLESYADVLALAQSMSVSILAVISFVIQARGENQFREVLNRYLALYQRICLTTRLRHLFPTKFVVFFLLKLFFTLCGCFHEIIPLFENSHFDDISQMVGTGFGIYMWLGTLCVLDACFLGFLVSGILYEHMANNIIAMLKRMEPIESQDERYRMTKYRRMQLLCDFADELDECAAIYSELYHVTNSFRRILQWQILFYIYLNFINICLMLYQYILHFLNDDEVVFVSIVMAFVKLANLVLLMMCADYTVRQSEVPKKLPLDIVCSDMDERWDKSVETFLGQLQTQRLEIKVLGFFHLNNEFILLILSAIISYLFILIQFGITGGFEASEDIKNRFD.

Topologically, residues 1–55 are cytoplasmic; the sequence is MFSSSSAMTGKRAESWSRLLLLWLYRCARGLLVLSSSLDRDKLQLKATKQGSRNR. A helical membrane pass occupies residues 56–76; that stretch reads FLHILWRCIVVMIYAGLWPML. The Extracellular portion of the chain corresponds to 77–90; that stretch reads TSAVIGKRLESYAD. Residues 91–111 traverse the membrane as a helical segment; that stretch reads VLALAQSMSVSILAVISFVIQ. Residues 112 to 145 are Cytoplasmic-facing; the sequence is ARGENQFREVLNRYLALYQRICLTTRLRHLFPTK. A helical transmembrane segment spans residues 146–166; it reads FVVFFLLKLFFTLCGCFHEII. Residues 167–184 are Extracellular-facing; that stretch reads PLFENSHFDDISQMVGTG. A helical membrane pass occupies residues 185-205; the sequence is FGIYMWLGTLCVLDACFLGFL. Over 206–277 the chain is Cytoplasmic; it reads VSGILYEHMA…NSFRRILQWQ (72 aa). A helical membrane pass occupies residues 278–298; sequence ILFYIYLNFINICLMLYQYIL. Over 299 to 305 the chain is Extracellular; that stretch reads HFLNDDE. Residues 306–326 traverse the membrane as a helical segment; sequence VVFVSIVMAFVKLANLVLLMM. At 327–383 the chain is on the cytoplasmic side; it reads CADYTVRQSEVPKKLPLDIVCSDMDERWDKSVETFLGQLQTQRLEIKVLGFFHLNNE. A helical membrane pass occupies residues 384–404; sequence FILLILSAIISYLFILIQFGI. Topologically, residues 405-419 are extracellular; the sequence is TGGFEASEDIKNRFD.

The protein belongs to the insect chemoreceptor superfamily. Gustatory receptor (GR) family. Gr93a subfamily. As to expression, in larvae, is expressed in neurons of the dorsal pharyngeal sense organs.

The protein resides in the cell membrane. Its function is as follows. Gustatory receptor required for response to the bitter in taste neurons. Gr93a cells respond to bitter compounds such as caffeine. Flies avoid bitter substances, suggesting that Gr93a neuron activity is sufficient to mediate avoidance behavior. The protein is Gustatory receptor for bitter taste 93a (Gr93a) of Drosophila melanogaster (Fruit fly).